The chain runs to 419 residues: UDP-N-acetylglucosamine 1-carboxyvinyltransferase (419 aa).

Residue 22–23 participates in phosphoenolpyruvate binding; it reads KN. UDP-N-acetyl-alpha-D-glucosamine is bound at residue arginine 93. Residue cysteine 117 is the Proton donor of the active site. The residue at position 117 (cysteine 117) is a 2-(S-cysteinyl)pyruvic acid O-phosphothioketal. UDP-N-acetyl-alpha-D-glucosamine-binding positions include 122 to 126, aspartate 308, and isoleucine 330; that span reads RPVDL.

The protein belongs to the EPSP synthase family. MurA subfamily.

Its subcellular location is the cytoplasm. It carries out the reaction phosphoenolpyruvate + UDP-N-acetyl-alpha-D-glucosamine = UDP-N-acetyl-3-O-(1-carboxyvinyl)-alpha-D-glucosamine + phosphate. Its pathway is cell wall biogenesis; peptidoglycan biosynthesis. In terms of biological role, cell wall formation. Adds enolpyruvyl to UDP-N-acetylglucosamine. This is UDP-N-acetylglucosamine 1-carboxyvinyltransferase from Pseudomonas putida (Arthrobacter siderocapsulatus).